The chain runs to 77 residues: Translation initiation factor IF-1, chloroplastic (77 aa).

Positions 1-71 (MKEQKLIHEG…TKGRIIYRLR (71 aa)) constitute an S1-like domain.

Belongs to the IF-1 family. As to quaternary structure, component of the 30S ribosomal translation pre-initiation complex which assembles on the 30S ribosome in the order IF-2 and IF-3, IF-1 and N-formylmethionyl-tRNA(fMet); mRNA recruitment can occur at any time during PIC assembly.

It localises to the plastid. Its subcellular location is the chloroplast. One of the essential components for the initiation of protein synthesis. Stabilizes the binding of IF-2 and IF-3 on the 30S subunit to which N-formylmethionyl-tRNA(fMet) subsequently binds. Helps modulate mRNA selection, yielding the 30S pre-initiation complex (PIC). Upon addition of the 50S ribosomal subunit IF-1, IF-2 and IF-3 are released leaving the mature 70S translation initiation complex. This chain is Translation initiation factor IF-1, chloroplastic, found in Drimys granadensis.